Here is a 192-residue protein sequence, read N- to C-terminus: MSSVKLIVGLGNPGGQYEQTRHNAGFWFVEDVARQYNVQFRPETKFLGEAARIQSNGLDVWLLKPMTFMNRSGQSIQAIAKFYKIAPEEILVVHDELDLDPGVARLKTSGGHGGHNGLRDTIAALGTKDFKRLRLGIGHPGDRNQVVDYVLKAPSKTDRALIDDAIYDATRVLPDLLNDDMARAMNELHTKT.

Position 17 (Y17) interacts with tRNA. The active-site Proton acceptor is H22. F68, N70, and N116 together coordinate tRNA.

It belongs to the PTH family. In terms of assembly, monomer.

It is found in the cytoplasm. It catalyses the reaction an N-acyl-L-alpha-aminoacyl-tRNA + H2O = an N-acyl-L-amino acid + a tRNA + H(+). Its function is as follows. Hydrolyzes ribosome-free peptidyl-tRNAs (with 1 or more amino acids incorporated), which drop off the ribosome during protein synthesis, or as a result of ribosome stalling. Functionally, catalyzes the release of premature peptidyl moieties from peptidyl-tRNA molecules trapped in stalled 50S ribosomal subunits, and thus maintains levels of free tRNAs and 50S ribosomes. The polypeptide is Peptidyl-tRNA hydrolase (Hydrogenovibrio crunogenus (strain DSM 25203 / XCL-2) (Thiomicrospira crunogena)).